The sequence spans 304 residues: Putative dihydroorotate dehydrogenase A (fumarate) (304 aa).

FMN is bound by residues Ser21 and 45–46; that span reads KS. Residues Lys45, 69 to 73, and Asn129 contribute to the substrate site; that span reads NAVGL. Residue Asn129 participates in FMN binding. Residue Cys132 is the Nucleophile of the active site. FMN-binding residues include Lys168 and Ile194. 195–196 serves as a coordination point for substrate; sequence NT. FMN contacts are provided by residues Gly220, 246-247, and 268-269; these read GG and GS.

It belongs to the dihydroorotate dehydrogenase family. Type 1 subfamily. As to quaternary structure, homodimer. FMN serves as cofactor.

It is found in the cytoplasm. It catalyses the reaction (S)-dihydroorotate + fumarate = orotate + succinate. It functions in the pathway pyrimidine metabolism; UMP biosynthesis via de novo pathway. Its function is as follows. Catalyzes the conversion of dihydroorotate to orotate with fumarate as the electron acceptor. The sequence is that of Putative dihydroorotate dehydrogenase A (fumarate) (pyrD) from Pediococcus pentosaceus (strain ATCC 25745 / CCUG 21536 / LMG 10740 / 183-1w).